Here is a 532-residue protein sequence, read N- to C-terminus: Glucose-6-phosphate isomerase (532 aa).

The active-site Proton donor is the E330. Catalysis depends on residues H359 and K460.

It belongs to the GPI family.

The protein localises to the cytoplasm. The enzyme catalyses alpha-D-glucose 6-phosphate = beta-D-fructose 6-phosphate. It participates in carbohydrate biosynthesis; gluconeogenesis. It functions in the pathway carbohydrate degradation; glycolysis; D-glyceraldehyde 3-phosphate and glycerone phosphate from D-glucose: step 2/4. In terms of biological role, catalyzes the reversible isomerization of glucose-6-phosphate to fructose-6-phosphate. The polypeptide is Glucose-6-phosphate isomerase (Prochlorococcus marinus (strain MIT 9211)).